Reading from the N-terminus, the 274-residue chain is MFTDKETHRKPFPTWAHLLHSEPSKQFVFGNWKMNKTLTEAQTFLKSFISSDILSNPQIITGIIPPFTLLSACQQAVSDSPIFLGAQTTHEADSGAFTGEISAPMLKDIGVDFVLIGHSERRHIFHEQNPVLAEKAAAAIHSGMIPVLCIGETLEEQESGATQDILLNQLTTGLSKLPEQASFILAYEPVWAIGTGKVAHPDLVQETHAFCRKTIASLFSKDIAERTPILYGGSVKADNARSLSLCPDVNGLLVGGASLSSENFLSIIQQIDIP.

31-33 (NWK) lines the substrate pocket. H118 acts as the Electrophile in catalysis. The active-site Proton acceptor is E188. Residues G194, S234, and 255-256 (GG) each bind substrate.

Belongs to the triosephosphate isomerase family. In terms of assembly, homodimer.

The protein resides in the cytoplasm. The catalysed reaction is D-glyceraldehyde 3-phosphate = dihydroxyacetone phosphate. It participates in carbohydrate biosynthesis; gluconeogenesis. Its pathway is carbohydrate degradation; glycolysis; D-glyceraldehyde 3-phosphate from glycerone phosphate: step 1/1. Functionally, involved in the gluconeogenesis. Catalyzes stereospecifically the conversion of dihydroxyacetone phosphate (DHAP) to D-glyceraldehyde-3-phosphate (G3P). In Chlamydia trachomatis serovar D (strain ATCC VR-885 / DSM 19411 / UW-3/Cx), this protein is Triosephosphate isomerase.